The sequence spans 590 residues: Protein NRT1/ PTR FAMILY 8.5 (590 aa).

A helical transmembrane segment spans residues 96–116 (ASDVMIWQGTCYITPLIGAVI). Thr126 is modified (phosphothreonine). 10 consecutive transmembrane segments (helical) span residues 130-150 (FSAI…LPVL), 168-188 (TVQY…TGGI), 214-234 (FFNW…TLLV), 242-262 (WGLG…SFFI), 365-385 (FPIW…STLF), 401-421 (IPPA…IPIY), 445-465 (MGIG…VETV), 478-498 (IFWQ…FFIG), 524-544 (AVGS…TALG), and 562-582 (FFWL…LICV).

It belongs to the major facilitator superfamily. Proton-dependent oligopeptide transporter (POT/PTR) (TC 2.A.17) family. Expressed in shoots, roots, stems, leaves, flowers and siliques.

Its subcellular location is the membrane. The polypeptide is Protein NRT1/ PTR FAMILY 8.5 (NPF8.5) (Arabidopsis thaliana (Mouse-ear cress)).